The following is a 146-amino-acid chain: Putative pre-16S rRNA nuclease (146 aa).

The protein belongs to the YqgF nuclease family.

It localises to the cytoplasm. Its function is as follows. Could be a nuclease involved in processing of the 5'-end of pre-16S rRNA. The sequence is that of Putative pre-16S rRNA nuclease from Pseudomonas savastanoi pv. phaseolicola (strain 1448A / Race 6) (Pseudomonas syringae pv. phaseolicola (strain 1448A / Race 6)).